The following is a 161-amino-acid chain: 6,7-dimethyl-8-ribityllumazine synthase (161 aa).

5-amino-6-(D-ribitylamino)uracil contacts are provided by residues W26, 58 to 60 (SFE), and 81 to 83 (VVI). Residue 86 to 87 (GT) participates in (2S)-2-hydroxy-3-oxobutyl phosphate binding. H89 (proton donor) is an active-site residue. F114 provides a ligand contact to 5-amino-6-(D-ribitylamino)uracil. A (2S)-2-hydroxy-3-oxobutyl phosphate-binding site is contributed by R128.

It belongs to the DMRL synthase family.

It carries out the reaction (2S)-2-hydroxy-3-oxobutyl phosphate + 5-amino-6-(D-ribitylamino)uracil = 6,7-dimethyl-8-(1-D-ribityl)lumazine + phosphate + 2 H2O + H(+). Its pathway is cofactor biosynthesis; riboflavin biosynthesis; riboflavin from 2-hydroxy-3-oxobutyl phosphate and 5-amino-6-(D-ribitylamino)uracil: step 1/2. Its function is as follows. Catalyzes the formation of 6,7-dimethyl-8-ribityllumazine by condensation of 5-amino-6-(D-ribitylamino)uracil with 3,4-dihydroxy-2-butanone 4-phosphate. This is the penultimate step in the biosynthesis of riboflavin. This is 6,7-dimethyl-8-ribityllumazine synthase from Streptomyces avermitilis (strain ATCC 31267 / DSM 46492 / JCM 5070 / NBRC 14893 / NCIMB 12804 / NRRL 8165 / MA-4680).